Consider the following 118-residue polypeptide: Protein Rev (118 aa).

Serine 5 is subject to Phosphoserine; by host CK2. The interval 18 to 26 is homomultimerization; sequence LIKILYQSN. Residues 23-49 form a disordered region; it reads YQSNPPPSPEGTRQARRNRRRRWRARQ. The Nuclear localization signal and RNA-binding (RRE) signature appears at 34–50; sequence TRQARRNRRRRWRARQR. Basic residues predominate over residues 36-49; that stretch reads QARRNRRRRWRARQ. The Nuclear export signal and binding to XPO1 signature appears at 73–84; that stretch reads LQLPPLERLNLN. The segment at 89–118 is disordered; the sequence is CGASGTQGVGSPQISVESPTVLESGTEEQC. Residues serine 92 and serine 99 each carry the phosphoserine; by host modification. Residues 92 to 112 are compositionally biased toward polar residues; sequence SGTQGVGSPQISVESPTVLES.

This sequence belongs to the HIV-1 REV protein family. In terms of assembly, homomultimer; when bound to the RRE. Multimeric assembly is essential for activity and may involve XPO1. Binds to human KPNB1, XPO1, TNPO1, RANBP5 and IPO7. Interacts with the viral Integrase. Interacts with human KHDRBS1. Interacts with human NAP1; this interaction decreases Rev multimerization and stimulates its activity. Interacts with human DEAD-box helicases DDX3 and DDX24; these interactions may serve for viral RNA export to the cytoplasm and packaging, respectively. Interacts with human PSIP1; this interaction may inhibit HIV-1 DNA integration by promoting dissociation of the Integrase-LEDGF/p75 complex. Asymmetrically arginine dimethylated at one site by host PRMT6. Methylation impairs the RNA-binding activity and export of viral RNA from the nucleus to the cytoplasm. Post-translationally, phosphorylated by protein kinase CK2. Presence of, and maybe binding to the N-terminus of the regulatory beta subunit of CK2 is necessary for CK2-mediated Rev's phosphorylation.

The protein localises to the host nucleus. It is found in the host nucleolus. The protein resides in the host cytoplasm. Functionally, escorts unspliced or incompletely spliced viral pre-mRNAs (late transcripts) out of the nucleus of infected cells. These pre-mRNAs carry a recognition sequence called Rev responsive element (RRE) located in the env gene, that is not present in fully spliced viral mRNAs (early transcripts). This function is essential since most viral proteins are translated from unspliced or partially spliced pre-mRNAs which cannot exit the nucleus by the pathway used by fully processed cellular mRNAs. Rev itself is translated from a fully spliced mRNA that readily exits the nucleus. Rev's nuclear localization signal (NLS) binds directly to KPNB1/Importin beta-1 without previous binding to KPNA1/Importin alpha-1. KPNB1 binds to the GDP bound form of RAN (Ran-GDP) and targets Rev to the nucleus. In the nucleus, the conversion from Ran-GDP to Ran-GTP dissociates Rev from KPNB1 and allows Rev's binding to the RRE in viral pre-mRNAs. Rev multimerization on the RRE via cooperative assembly exposes its nuclear export signal (NES) to the surface. Rev can then form a complex with XPO1/CRM1 and Ran-GTP, leading to nuclear export of the complex. Conversion from Ran-GTP to Ran-GDP mediates dissociation of the Rev/RRE/XPO1/RAN complex, so that Rev can return to the nucleus for a subsequent round of export. Beside KPNB1, also seems to interact with TNPO1/Transportin-1, RANBP5/IPO5 and IPO7/RANBP7 for nuclear import. The nucleoporin-like HRB/RIP is an essential cofactor that probably indirectly interacts with Rev to release HIV RNAs from the perinuclear region to the cytoplasm. This Human immunodeficiency virus type 1 group M subtype D (isolate Z2/CDC-Z34) (HIV-1) protein is Protein Rev.